The primary structure comprises 216 residues: Urease accessory protein UreG (216 aa).

25–32 (GPVGSGKT) provides a ligand contact to GTP.

The protein belongs to the SIMIBI class G3E GTPase family. UreG subfamily. Homodimer. UreD, UreF and UreG form a complex that acts as a GTP-hydrolysis-dependent molecular chaperone, activating the urease apoprotein by helping to assemble the nickel containing metallocenter of UreC. The UreE protein probably delivers the nickel.

The protein localises to the cytoplasm. Facilitates the functional incorporation of the urease nickel metallocenter. This process requires GTP hydrolysis, probably effectuated by UreG. The chain is Urease accessory protein UreG from Burkholderia thailandensis (strain ATCC 700388 / DSM 13276 / CCUG 48851 / CIP 106301 / E264).